The primary structure comprises 127 residues: Fluoride-specific ion channel FluC (127 aa).

Transmembrane regions (helical) follow at residues 3-23 (LVFL…YFVG), 38-58 (LGTF…GHLA), 67-87 (FGIF…SYGL), and 102-122 (ISYV…GWFL). Na(+) is bound by residues Gly-77 and Thr-80.

The protein belongs to the fluoride channel Fluc/FEX (TC 1.A.43) family.

It localises to the cell inner membrane. It carries out the reaction fluoride(in) = fluoride(out). With respect to regulation, na(+) is not transported, but it plays an essential structural role and its presence is essential for fluoride channel function. Fluoride-specific ion channel. Important for reducing fluoride concentration in the cell, thus reducing its toxicity. This chain is Fluoride-specific ion channel FluC, found in Helicobacter acinonychis (strain Sheeba).